We begin with the raw amino-acid sequence, 759 residues long: Hormone-sensitive lipase (759 aa).

Residues 349-351 (HGG) carry the Involved in the stabilization of the negatively charged intermediate by the formation of the oxyanion hole motif. Ser-423 is a catalytic residue. The segment at 534–553 (GRKPQKTTSPTAESVRPTES) is disordered. Ser-557 bears the Phosphoserine mark. Ser-559 is subject to Phosphoserine; by AMPK. Thr-574 carries the post-translational modification Phosphothreonine. The tract at residues 583-604 (LSNSEPSDSPEMSQSMETLGPS) is disordered. The segment covering 585 to 604 (NSEPSDSPEMSQSMETLGPS) has biased composition (polar residues). Phosphoserine is present on residues Ser-597, Ser-618, Ser-650, and Ser-651. Active-site residues include Asp-694 and His-724.

The protein belongs to the 'GDXG' lipolytic enzyme family. As to quaternary structure, monomer and homodimer. Interacts with CAVIN1 in the adipocyte cytoplasm. Interacts with PLIN5. Post-translationally, phosphorylation by AMPK reduces its translocation towards the lipid droplets.

It is found in the cell membrane. It localises to the membrane. The protein localises to the caveola. Its subcellular location is the cytoplasm. The protein resides in the cytosol. It is found in the lipid droplet. The catalysed reaction is a diacylglycerol + H2O = a monoacylglycerol + a fatty acid + H(+). The enzyme catalyses a triacylglycerol + H2O = a diacylglycerol + a fatty acid + H(+). It carries out the reaction a monoacylglycerol + H2O = glycerol + a fatty acid + H(+). It catalyses the reaction Hydrolyzes glycerol monoesters of long-chain fatty acids.. The catalysed reaction is cholesteryl (9Z-octadecenoate) + H2O = cholesterol + (9Z)-octadecenoate + H(+). The enzyme catalyses all-trans-retinyl hexadecanoate + H2O = all-trans-retinol + hexadecanoate + H(+). It carries out the reaction 1,2-di-(9Z-octadecenoyl)-glycerol + H2O = (9Z-octadecenoyl)-glycerol + (9Z)-octadecenoate + H(+). It catalyses the reaction 2-(5Z,8Z,11Z,14Z-eicosatetraenoyl)-glycerol + H2O = glycerol + (5Z,8Z,11Z,14Z)-eicosatetraenoate + H(+). The catalysed reaction is 1-(9Z-octadecenoyl)-glycerol + H2O = glycerol + (9Z)-octadecenoate + H(+). The enzyme catalyses 2-(9Z-octadecenoyl)-glycerol + H2O = glycerol + (9Z)-octadecenoate + H(+). It carries out the reaction 1-O-hexadecyl-2-acetyl-sn-glycerol + H2O = 1-O-hexadecyl-sn-glycerol + acetate + H(+). It catalyses the reaction 1,2-di-(9Z-octadecenoyl)-sn-glycerol + H2O = (9Z-octadecenoyl)-glycerol + (9Z)-octadecenoate + H(+). The catalysed reaction is 1,3-di-(9Z-octadecenoyl)-glycerol + H2O = 1-(9Z-octadecenoyl)-glycerol + (9Z)-octadecenoate + H(+). The enzyme catalyses 1,2-di-(9Z-octadecenoyl)-glycerol + (9Z)-octadecenoate + H(+) = 1,2,3-tri-(9Z-octadecenoyl)-glycerol + H2O. It carries out the reaction 2,3-di-(9Z)-octadecenoyl-sn-glycerol + H2O = 2-(9Z-octadecenoyl)-glycerol + (9Z)-octadecenoate + H(+). It catalyses the reaction 1,2,3-tri-(9Z-octadecenoyl)-glycerol + H2O = di-(9Z)-octadecenoylglycerol + (9Z)-octadecenoate + H(+). The catalysed reaction is 1,2-di-(9Z-octadecenoyl)-glycerol + H2O = 2-(9Z-octadecenoyl)-glycerol + (9Z)-octadecenoate + H(+). Its pathway is glycerolipid metabolism; triacylglycerol degradation. In terms of biological role, lipase with broad substrate specificity, catalyzing the hydrolysis of triacylglycerols (TAGs), diacylglycerols (DAGs), monoacylglycerols (MAGs), cholesteryl esters and retinyl esters. Shows a preferential hydrolysis of DAGs over TAGs and MAGs and of the fatty acid (FA) esters at the sn-1 and sn-2 positions of the glycerol backbone in TAGs. Preferentially hydrolyzes FA esters at the sn-3 position of the glycerol backbone in DAGs. Catalyzes the hydrolysis of 2-arachidonoylglycerol, an endocannabinoid and of 2-acetyl monoalkylglycerol ether, the penultimate precursor of the pathway for de novo synthesis of platelet-activating factor. In adipose tissue and heart, it primarily hydrolyzes stored triglycerides to free fatty acids, while in steroidogenic tissues, it principally converts cholesteryl esters to free cholesterol for steroid hormone production. In Mus musculus (Mouse), this protein is Hormone-sensitive lipase (Lipe).